A 65-amino-acid polypeptide reads, in one-letter code: Prokaryotic ubiquitin-like protein Pup (65 aa).

Positions 1 to 13 are enriched in basic and acidic residues; it reads MAQEQKQPRKSSE. Positions 1–34 are disordered; that stretch reads MAQEQKQPRKSSEADEAVEAVAETDVSERKEALD. The interval 21-59 is ARC ATPase binding; it reads VAETDVSERKEALDSDVDDILDEIDDVLETNAEDFVKSF. A coiled-coil region spans residues 25–49; the sequence is DVSERKEALDSDVDDILDEIDDVLE. Glu65 participates in a covalent cross-link: Isoglutamyl lysine isopeptide (Glu-Lys) (interchain with K-? in acceptor proteins).

It belongs to the prokaryotic ubiquitin-like protein family. Strongly interacts with the proteasome-associated ATPase ARC through a hydrophobic interface; the interacting region of Pup lies in its C-terminal half. There is one Pup binding site per ARC hexamer ring.

Its pathway is protein degradation; proteasomal Pup-dependent pathway. Functionally, protein modifier that is covalently attached to lysine residues of substrate proteins, thereby targeting them for proteasomal degradation. The tagging system is termed pupylation. The polypeptide is Prokaryotic ubiquitin-like protein Pup (Nocardioides sp. (strain ATCC BAA-499 / JS614)).